The sequence spans 274 residues: Thiazole synthase (274 aa).

Catalysis depends on Lys-115, which acts as the Schiff-base intermediate with DXP. 1-deoxy-D-xylulose 5-phosphate contacts are provided by residues Gly-176, 202–203 (AG), and 224–225 (NS).

This sequence belongs to the ThiG family. As to quaternary structure, homotetramer. Forms heterodimers with either ThiH or ThiS.

It is found in the cytoplasm. It catalyses the reaction [ThiS sulfur-carrier protein]-C-terminal-Gly-aminoethanethioate + 2-iminoacetate + 1-deoxy-D-xylulose 5-phosphate = [ThiS sulfur-carrier protein]-C-terminal Gly-Gly + 2-[(2R,5Z)-2-carboxy-4-methylthiazol-5(2H)-ylidene]ethyl phosphate + 2 H2O + H(+). Its pathway is cofactor biosynthesis; thiamine diphosphate biosynthesis. Catalyzes the rearrangement of 1-deoxy-D-xylulose 5-phosphate (DXP) to produce the thiazole phosphate moiety of thiamine. Sulfur is provided by the thiocarboxylate moiety of the carrier protein ThiS. In vitro, sulfur can be provided by H(2)S. The chain is Thiazole synthase from Parasynechococcus marenigrum (strain WH8102).